The primary structure comprises 133 residues: ATP synthase epsilon chain (133 aa).

It belongs to the ATPase epsilon chain family. As to quaternary structure, F-type ATPases have 2 components, CF(1) - the catalytic core - and CF(0) - the membrane proton channel. CF(1) has five subunits: alpha(3), beta(3), gamma(1), delta(1), epsilon(1). CF(0) has three main subunits: a, b and c.

It is found in the cell membrane. Functionally, produces ATP from ADP in the presence of a proton gradient across the membrane. The protein is ATP synthase epsilon chain (atpC) of Mycoplasma pneumoniae (strain ATCC 29342 / M129 / Subtype 1) (Mycoplasmoides pneumoniae).